The following is a 336-amino-acid chain: Quinolinate synthase (336 aa).

Residues His-25 and Ser-42 each contribute to the iminosuccinate site. Cys-86 contributes to the [4Fe-4S] cluster binding site. Residues 117–119 (YIN) and Ser-138 each bind iminosuccinate. Position 198 (Cys-198) interacts with [4Fe-4S] cluster. Iminosuccinate is bound by residues 224–226 (HPE) and Thr-241. A [4Fe-4S] cluster-binding site is contributed by Cys-288.

Belongs to the quinolinate synthase family. Type 3 subfamily. The cofactor is [4Fe-4S] cluster.

Its subcellular location is the cytoplasm. The catalysed reaction is iminosuccinate + dihydroxyacetone phosphate = quinolinate + phosphate + 2 H2O + H(+). It functions in the pathway cofactor biosynthesis; NAD(+) biosynthesis; quinolinate from iminoaspartate: step 1/1. Its function is as follows. Catalyzes the condensation of iminoaspartate with dihydroxyacetone phosphate to form quinolinate. This is Quinolinate synthase from Helicobacter pylori (strain ATCC 700392 / 26695) (Campylobacter pylori).